The chain runs to 557 residues: MAAQGFLLIATFLLVLMVLARPLGSGLARLINDIPLPGTAGVERVLFRLPGVSDSEMNWKQYLCAILGLNMLGLAVLFFMLLGQHYLPLNPQQLPGLSWDLALNTAVSFVTNTNWQSYSGETTLSYFSQMAGLTVQNFLSAASGIAVIFALIRAFTRQSMSTLGNAWVDLLRITLWVLAPVALLIALFFIQQGALQNFLPYQAVTTIEGSQQLLPMGPVASQEAIKMLGTNGGGFFNANSSHPFENPTALTNFVQMLAIFLIPTALCFAFGEVAGDRRQGRMLLWAMSVIFVICVGVVMWAEVQGNPHLLALGADSSINMEGKESRFGVLVSSLFAVVTTAASCGAVIAMHDSFTALGGMVPMWLMQIGEVVFGGVGSGLYGMMLFVLLAVFIAGLMIGRTPEYLGKKIDVREMKLTALAILVTPTLVLMGAALAMMTDAERSAMLNPGPHGFSEVLYAVSSAANNNGSAFAGLSANSPFWNCLLALCMFVGRFGVIIPVMAIAGSLVSKKSQPASSGTLPTHGPLFVGLLIGTVLLVGALTFIPALALGPVAEYLS.

12 consecutive transmembrane segments (helical) span residues Gly-5 to Ser-25, Leu-63 to Gly-83, Gly-132 to Ile-152, Leu-170 to Ile-190, Phe-253 to Val-273, Leu-283 to Val-303, Val-329 to Ala-349, Ala-356 to Val-376, Gly-379 to Gly-399, Leu-416 to Met-436, Leu-484 to Ala-504, and Leu-526 to Ala-546.

It belongs to the KdpA family. In terms of assembly, the system is composed of three essential subunits: KdpA, KdpB and KdpC.

The protein localises to the cell inner membrane. In terms of biological role, part of the high-affinity ATP-driven potassium transport (or Kdp) system, which catalyzes the hydrolysis of ATP coupled with the electrogenic transport of potassium into the cytoplasm. This subunit binds the periplasmic potassium ions and delivers the ions to the membrane domain of KdpB through an intramembrane tunnel. The sequence is that of Potassium-transporting ATPase potassium-binding subunit from Escherichia coli O81 (strain ED1a).